Consider the following 387-residue polypeptide: uncharacterized protein (387 aa).

It belongs to the geranylgeranyl reductase family. ChlP subfamily.

This is an uncharacterized protein from Methanosarcina barkeri (strain Fusaro / DSM 804).